We begin with the raw amino-acid sequence, 193 residues long: MNNLEAILRLKTIDAAKKLLGHFLVSKYNNKILIGKIVETEAYLYNDPACHSYSNRTKRNSMMYAQAGTSYVYFTYGMHYCFNVVTADVGIGEAILIRALEPIAGIEQMQLNRSKTKLMDLCSGPAKLTQALNINLKDNGINLLDKDSSILLRYNNDLINEIDIVQTQRIGISKAKDMPYRFYIKDNIFVSKK.

It belongs to the DNA glycosylase MPG family.

The chain is Putative 3-methyladenine DNA glycosylase from Francisella tularensis subsp. tularensis (strain FSC 198).